A 435-amino-acid chain; its full sequence is MQVSVESTQGLERKLTVTIAAEAFDKEYNSRVHHLAKTQRVDGFRPGKVPTSVVTKRFGAGIFQEVAGELMQRNFSEAVMAEKLNLAARPNFEPQAREKGQDFTFTATFEVYPEVTLSPLEALSIEKDSAEVTDADLDKMIETLRKQHAEWNAVEREAANDDQVTLDFEGSIDGEVFEGGKAEGFDIVLGSGKMIPGFEAGIVGHAAGSEFTIDVNFPEDYHAEQLKGKAVQFAIKLTKVEEQILPEITPEFVQKFGVENGELETLKHDIKQNMVRELSQALKNSAKDKVLNALVENNEIEIPKALVEDEIVVLRKQAMERYAKEMDPENLPELPAELFKEQAEKRVKVGFLLGEVINVNELTVDQEKVAALIESAASAYDNPAEVIAYYKNNKEMMQNMENVALEEQAVDFIIEKAKVTEVNKSFDEVMNKVVA.

Residues Asp161–Pro246 enclose the PPIase FKBP-type domain.

This sequence belongs to the FKBP-type PPIase family. Tig subfamily.

Its subcellular location is the cytoplasm. The catalysed reaction is [protein]-peptidylproline (omega=180) = [protein]-peptidylproline (omega=0). Involved in protein export. Acts as a chaperone by maintaining the newly synthesized protein in an open conformation. Functions as a peptidyl-prolyl cis-trans isomerase. The sequence is that of Trigger factor from Psychromonas ingrahamii (strain DSM 17664 / CCUG 51855 / 37).